Here is a 656-residue protein sequence, read N- to C-terminus: MIKSQKEYLERIEYLNTLSHHYYNLDDSIVSDAVYDELYQELKAYEGKNPNSIQANSPTQKVGATTPNSFNKNPHLMRMWSLDDVFNQSELQAWLQRILKAYPSASFVCSPKLDGVSLNLLYQHGKLVKATTRGNGLEGELVSANAKHIANIPHAIAYNGEIEIRGEVIISKKDFDALNKERLNANEPLFANPRNAASGSLRQLDSEITKKRKLQFIPWGVGKHSLNFISFKECLDFIVSLGFSAIQYLSLNKNHQEIEENYHTLIKEREGFFALLDGMVIVVNELNIQKELGYTQKSPKFACAYKFPALEKHTKIVGIINQVGRSGAITPVAVLEPVEIAGAIITKATLHNYSEIEKKNIMLNDRVVVIRSGDVIPKIIKPLESYRDGSQHKIERPKVCPICSHELLCEEIFTYCQNLNCPARLKESLIHFASKDALNIQGLGDKVIEQLFEEKLIFNALDLYALKLEDLMRLDKFKIKKAQNLLDAIQKSKNPPLWRLINALGIEHIGKGASKTLARYGLNVLEKSEAEFLEMEGFGVEMARSLVNFYASNQEFIRSLFDLLNPKNSDMAEEKQESSSVFSNKTIVLTGTLSKPRQEYAQMLENLGAKISSSVSAKTDFLIVGENAGSKLALAKKHGVSVLNEEELLKRLKEFD.

NAD(+) contacts are provided by residues 32–36 (DAVYD) and 81–82 (SL). Catalysis depends on K112, which acts as the N6-AMP-lysine intermediate. Positions 133, 167, and 306 each coordinate NAD(+). Positions 400, 403, 416, and 421 each coordinate Zn(2+). The region spanning 577 to 656 (ESSSVFSNKT…ELLKRLKEFD (80 aa)) is the BRCT domain.

This sequence belongs to the NAD-dependent DNA ligase family. LigA subfamily. Mg(2+) is required as a cofactor. The cofactor is Mn(2+).

It carries out the reaction NAD(+) + (deoxyribonucleotide)n-3'-hydroxyl + 5'-phospho-(deoxyribonucleotide)m = (deoxyribonucleotide)n+m + AMP + beta-nicotinamide D-nucleotide.. Functionally, DNA ligase that catalyzes the formation of phosphodiester linkages between 5'-phosphoryl and 3'-hydroxyl groups in double-stranded DNA using NAD as a coenzyme and as the energy source for the reaction. It is essential for DNA replication and repair of damaged DNA. This Helicobacter pylori (strain Shi470) protein is DNA ligase.